A 234-amino-acid polypeptide reads, in one-letter code: Endonuclease V (234 aa).

Positions 36 and 104 each coordinate Mg(2+).

This sequence belongs to the endonuclease V family. The cofactor is Mg(2+).

It localises to the cytoplasm. It carries out the reaction Endonucleolytic cleavage at apurinic or apyrimidinic sites to products with a 5'-phosphate.. In terms of biological role, DNA repair enzyme involved in the repair of deaminated bases. Selectively cleaves double-stranded DNA at the second phosphodiester bond 3' to a deoxyinosine leaving behind the intact lesion on the nicked DNA. This Yersinia pestis protein is Endonuclease V.